The following is a 333-amino-acid chain: Flotillin-like protein FloA (333 aa).

A helical membrane pass occupies residues 10–30 (IFLIAGGIIFLVLFFHYVPFF).

This sequence belongs to the flotillin-like FloA family. Homooligomerizes.

Its subcellular location is the cell membrane. The protein resides in the membrane raft. Found in functional membrane microdomains (FMM) that may be equivalent to eukaryotic membrane rafts. FMMs are highly dynamic and increase in number as cells age. Flotillins are thought to be important factors in membrane fluidity. The polypeptide is Flotillin-like protein FloA (Bacteroides fragilis (strain ATCC 25285 / DSM 2151 / CCUG 4856 / JCM 11019 / LMG 10263 / NCTC 9343 / Onslow / VPI 2553 / EN-2)).